A 923-amino-acid chain; its full sequence is Cell cycle and apoptosis regulator protein 2 (923 aa).

Positions 1–35 are disordered; the sequence is MSQFKRQRINPLPGGRNFSGTASTSLLGPPPGLLT. The residue at position 35 (T35) is a Phosphothreonine. K112 is subject to N6-acetyllysine; by KAT8. An N6-methyllysine modification is found at K123. S124 bears the Phosphoserine mark. 3 disordered regions span residues 178–218, 446–510, and 568–643; these read LNRF…KKPR, KAAE…PAVI, and VSPP…SEDL. R180 bears the Omega-N-methylarginine mark. A compositionally biased stretch (basic and acidic residues) spans 188 to 200; it reads GRLDQGRSDDYDS. At K215 the chain carries N6-acetyllysine; by KAT8. Low complexity predominate over residues 446–458; that stretch reads KAAEAAPPTQEAQ. T454 is modified (phosphothreonine; by ATM, ATR and CK2). T484 is modified (phosphothreonine). Residue S569 is modified to Phosphoserine. Residues 572 to 602 show a composition bias toward basic and acidic residues; it reads EPEKEEAAKEEATKEEEAIKEEVVKEPKDEA. K591 participates in a covalent cross-link: Glycyl lysine isopeptide (Lys-Gly) (interchain with G-Cter in SUMO2 and SUMO3); alternate. K591 participates in a covalent cross-link: Glycyl lysine isopeptide (Lys-Gly) (interchain with G-Cter in SUMO2); alternate. Residues 610-670 are interaction with MCC; it reads ESEAPLKEDG…EEFAGAKLED (61 aa). Phosphoserine is present on residues S627, S675, S678, S681, S687, and S808. Residues 704-923 are interaction with NR1D1; that stretch reads DCLLAFVFFD…VEKEEPAPSN (220 aa). Positions 829–909 form a coiled coil; that stretch reads LENKIHTLEL…QLEIQRVVEK (81 aa). Position 897 is a phosphothreonine (T897).

Component of the DBIRD complex. Interacts with ZNF326/ZIRD; the interaction is direct. Interacts (via N-terminus) with SIRT1, which inhibits the deacetylation of substrates. Interacts (via N-terminus) with SUV39H1; this interaction abolishes the interaction with SIRT1. Component of a nuclear receptor-mediated transcription complex composed of at least ZNF335, CCAR2 and EMSY; the complex stimulates the transcription of nuclear receptor target genes such as SOX9 and HOXA1. Within the complex interacts with EMSY and interacts with ZNF335 (via C-terminus). Components of this complex may associate with components of a histone methylation complex to form a complex at least composed of ZNF335, HCFC1, CCAR2, EMSY, MKI67, RBBP5, ASH2L and WDR5. Within this complex, interacts with ASH2L. Interacts with NR1D1. Interacts (via N-terminus) with ESR1 and ESR2. Interacts (via N-terminus) with HDAC3 (via C-terminus). Interacts with HDAC1 and MED2F. Interacts with MCC. Interacts (via N-terminus) with NR1H2 and NR1H3 in a ligand-independent manner. Interacts with CSNK2A1. Interacts (via N-terminus) with p53/TP53. Interacts (via N-terminus) with BRCA1 (via the BRCT domains). Interacts (via N-terminus) with CHEK2 (via protein kinase domain). Interacts with PSEM3. Interacts (via N-terminus) with PSIA3 and SENP1. The sumoylated form shows a preferential interaction with SIRT1 as compared to its unmodified form. Interacts with CECR2; may form part of the CERF-1 and/or CEF-5 ISWI chromatin remodeling complexes in embryonic stem cells. In terms of processing, ATM/ATR-mediated phosphorylation at Thr-454 upon DNA damage promotes binding to SIRT1. Phosphorylation at Thr-454 promotes its sumoylation by switching the binding partner of CCAR2 from SENP1 to PIAS3. Acetylation at Lys-112 and Lys-215 by KAT8 prevents inhibitory binding to SIRT1 and increases its deacetylase activity. Post-translationally, genotoxic stress induces its sumoylation and sumoylation promotes the SIRT1-CCAR2 interaction which in turn inhibits SIRT1-mediated deacetylation of p53/TP53. Sumoylation leads to transcriptional activation of p53/TP53 by sequestering SIRT1 from p53/TP53. Desumoylated by SENP1. As to expression, expressed in gastric carcinoma tissue and the expression gradually increases with the progression of the carcinoma (at protein level). Expressed ubiquitously in normal tissues. Expressed in 84 to 100% of neoplastic breast, lung, and colon tissues.

It is found in the nucleus. It localises to the cytoplasm. The protein localises to the cytoskeleton. The protein resides in the spindle. Functionally, core component of the DBIRD complex, a multiprotein complex that acts at the interface between core mRNP particles and RNA polymerase II (RNAPII) and integrates transcript elongation with the regulation of alternative splicing: the DBIRD complex affects local transcript elongation rates and alternative splicing of a large set of exons embedded in (A + T)-rich DNA regions. Inhibits SIRT1 deacetylase activity leading to increasing levels of p53/TP53 acetylation and p53-mediated apoptosis. Inhibits SUV39H1 methyltransferase activity. Mediates ligand-dependent transcriptional activation by nuclear hormone receptors. Plays a critical role in maintaining genomic stability and cellular integrity following UV-induced genotoxic stress. Regulates the circadian expression of the core clock components NR1D1 and BMAL1. Enhances the transcriptional repressor activity of NR1D1 through stabilization of NR1D1 protein levels by preventing its ubiquitination and subsequent degradation. Represses the ligand-dependent transcriptional activation function of ESR2. Acts as a regulator of PCK1 expression and gluconeogenesis by a mechanism that involves, at least in part, both NR1D1 and SIRT1. Negatively regulates the deacetylase activity of HDAC3 and can alter its subcellular localization. Positively regulates the beta-catenin pathway (canonical Wnt signaling pathway) and is required for MCC-mediated repression of the beta-catenin pathway. Represses ligand-dependent transcriptional activation function of NR1H2 and NR1H3 and inhibits the interaction of SIRT1 with NR1H3. Plays an important role in tumor suppression through p53/TP53 regulation; stabilizes p53/TP53 by affecting its interaction with ubiquitin ligase MDM2. Represses the transcriptional activator activity of BRCA1. Inhibits SIRT1 in a CHEK2 and PSEM3-dependent manner and inhibits the activity of CHEK2 in vitro. The protein is Cell cycle and apoptosis regulator protein 2 (CCAR2) of Homo sapiens (Human).